The sequence spans 109 residues: Juvenile hormone esterase, isoform A (109 aa).

Belongs to the type-B carboxylesterase/lipase family. As to expression, fat body, the site of their biosynthesis, and the hemolymph where it is secreted.

It catalyses the reaction juvenile hormone I + H2O = juvenile hormone I carboxylate + methanol + H(+). It carries out the reaction juvenile hormone III + H2O = juvenile hormone III carboxylate + methanol + H(+). Functionally, JH esterase plays a crucial role in the decrease of JH activity in lepidopteran insects, by hydrolyzing the methyl ester of JH. It is also involved in the transport of JH. In Trichoplusia ni (Cabbage looper), this protein is Juvenile hormone esterase, isoform A.